A 603-amino-acid chain; its full sequence is Sorting nexin-41 (603 aa).

A disordered region spans residues 1–36; sequence MNSFRESDEEDNNPFSGTNHLYASGIGAVPEGDDDF. The PX domain occupies 121 to 241; sequence AEGSLGALRI…QKFLNPEYIW (121 aa). Positions 159, 161, 185, and 208 each coordinate a 1,2-diacyl-sn-glycero-3-phospho-(1D-myo-inositol-3-phosphate).

The protein belongs to the sorting nexin family.

It localises to the endosome membrane. Its subcellular location is the endomembrane system. Functionally, may be required for cytoplasm to vacuole transport (Cvt) and pexophagy. The polypeptide is Sorting nexin-41 (SNX41) (Eremothecium gossypii (strain ATCC 10895 / CBS 109.51 / FGSC 9923 / NRRL Y-1056) (Yeast)).